Reading from the N-terminus, the 340-residue chain is Cysteinyl leukotriene receptor 1 (340 aa).

Residues 1 to 31 are Extracellular-facing; that stretch reads MDGVRNLTVSCASSNTCNDTIDDFRNQVYST. N-linked (GlcNAc...) asparagine glycosylation is found at N6 and N18. Residues 32-52 form a helical membrane-spanning segment; sequence LYSMITVVGFFGNGFVLYVLI. Over 53 to 60 the chain is Cytoplasmic; it reads KTYHEKSA. A helical transmembrane segment spans residues 61 to 81; sequence YQVYMINLAVADLLCVCTLPL. Over 82-109 the chain is Extracellular; it reads RVVYYVHKGIWLFGDFLCRLSTYALYVN. C99 and C176 are oxidised to a cystine. A helical membrane pass occupies residues 110–130; it reads LYCSIFFMTAMSFFRCIAIVF. Over 131 to 144 the chain is Cytoplasmic; the sequence is PVQNINLITHKKAK. Residues 145 to 165 form a helical membrane-spanning segment; the sequence is IVCIAIWIFVILTSSPFLMST. Residues 166-196 are Extracellular-facing; it reads SYKDEKNNTKCFEPPQXNQAKYHVLVLHYVS. N172 carries N-linked (GlcNAc...) asparagine glycosylation. Residues 197–217 form a helical membrane-spanning segment; the sequence is LFVGFIIPFVIIIVCYTMIIL. The Cytoplasmic segment spans residues 218–233; sequence TLLKNSMKKNISSRKK. A helical membrane pass occupies residues 234–254; it reads AIGMIIVVTAAFLISFMPYHI. Over 255 to 279 the chain is Extracellular; it reads QRTIHLHFLHNDTKHCDSVLRMQKS. An N-linked (GlcNAc...) asparagine glycan is attached at N265. The chain crosses the membrane as a helical span at residues 280-300; the sequence is VXITLSLAASNCCFDPLLYFF. Topologically, residues 301-340 are cytoplasmic; sequence SGGNFREGLSTFRKHSLSTMTYVPKKKTSLPEKAQEIYKE.

The protein belongs to the G-protein coupled receptor 1 family.

It localises to the cell membrane. Receptor for cysteinyl leukotrienes mediating constriction of the microvascular smooth muscle during an inflammatory response. This response is mediated via a G-protein that activates a phosphatidylinositol-calcium second messenger system. The sequence is that of Cysteinyl leukotriene receptor 1 (CYSLTR1) from Sus scrofa (Pig).